Reading from the N-terminus, the 555-residue chain is Dihydroxy-acid dehydratase (555 aa).

Aspartate 78 is a binding site for Mg(2+). Cysteine 119 serves as a coordination point for [2Fe-2S] cluster. Mg(2+) is bound by residues aspartate 120 and lysine 121. At lysine 121 the chain carries N6-carboxylysine. A [2Fe-2S] cluster-binding site is contributed by cysteine 192. Residue glutamate 444 coordinates Mg(2+). The active-site Proton acceptor is the serine 470.

The protein belongs to the IlvD/Edd family. In terms of assembly, homodimer. [2Fe-2S] cluster serves as cofactor. Requires Mg(2+) as cofactor.

It catalyses the reaction (2R)-2,3-dihydroxy-3-methylbutanoate = 3-methyl-2-oxobutanoate + H2O. The enzyme catalyses (2R,3R)-2,3-dihydroxy-3-methylpentanoate = (S)-3-methyl-2-oxopentanoate + H2O. The protein operates within amino-acid biosynthesis; L-isoleucine biosynthesis; L-isoleucine from 2-oxobutanoate: step 3/4. It participates in amino-acid biosynthesis; L-valine biosynthesis; L-valine from pyruvate: step 3/4. Functions in the biosynthesis of branched-chain amino acids. Catalyzes the dehydration of (2R,3R)-2,3-dihydroxy-3-methylpentanoate (2,3-dihydroxy-3-methylvalerate) into 2-oxo-3-methylpentanoate (2-oxo-3-methylvalerate) and of (2R)-2,3-dihydroxy-3-methylbutanoate (2,3-dihydroxyisovalerate) into 2-oxo-3-methylbutanoate (2-oxoisovalerate), the penultimate precursor to L-isoleucine and L-valine, respectively. The polypeptide is Dihydroxy-acid dehydratase (Halalkalibacterium halodurans (strain ATCC BAA-125 / DSM 18197 / FERM 7344 / JCM 9153 / C-125) (Bacillus halodurans)).